Here is a 1399-residue protein sequence, read N- to C-terminus: DNA-directed RNA polymerase subunit beta' (1399 aa).

Cys-70, Cys-72, Cys-85, and Cys-88 together coordinate Zn(2+). Residues Asp-460, Asp-462, and Asp-464 each contribute to the Mg(2+) site. The Zn(2+) site is built by Cys-814, Cys-888, Cys-895, and Cys-898.

It belongs to the RNA polymerase beta' chain family. As to quaternary structure, the RNAP catalytic core consists of 2 alpha, 1 beta, 1 beta' and 1 omega subunit. When a sigma factor is associated with the core the holoenzyme is formed, which can initiate transcription. Requires Mg(2+) as cofactor. Zn(2+) is required as a cofactor.

It carries out the reaction RNA(n) + a ribonucleoside 5'-triphosphate = RNA(n+1) + diphosphate. DNA-dependent RNA polymerase catalyzes the transcription of DNA into RNA using the four ribonucleoside triphosphates as substrates. The protein is DNA-directed RNA polymerase subunit beta' of Pseudomonas putida (strain W619).